The sequence spans 349 residues: 4-hydroxythreonine-4-phosphate dehydrogenase (349 aa).

Positions 141 and 142 each coordinate substrate. Residues His176, His221, and His276 each contribute to the a divalent metal cation site. Positions 284, 293, and 302 each coordinate substrate.

This sequence belongs to the PdxA family. As to quaternary structure, homodimer. The cofactor is Zn(2+). Mg(2+) serves as cofactor. It depends on Co(2+) as a cofactor.

It is found in the cytoplasm. The catalysed reaction is 4-(phosphooxy)-L-threonine + NAD(+) = 3-amino-2-oxopropyl phosphate + CO2 + NADH. Its pathway is cofactor biosynthesis; pyridoxine 5'-phosphate biosynthesis; pyridoxine 5'-phosphate from D-erythrose 4-phosphate: step 4/5. Its function is as follows. Catalyzes the NAD(P)-dependent oxidation of 4-(phosphooxy)-L-threonine (HTP) into 2-amino-3-oxo-4-(phosphooxy)butyric acid which spontaneously decarboxylates to form 3-amino-2-oxopropyl phosphate (AHAP). In Methylorubrum populi (strain ATCC BAA-705 / NCIMB 13946 / BJ001) (Methylobacterium populi), this protein is 4-hydroxythreonine-4-phosphate dehydrogenase.